The primary structure comprises 184 residues: ATP synthase subunit b (184 aa).

Residues 16-36 traverse the membrane as a helical segment; that stretch reads LIPPIPELVIGLIAFVIVFGF.

This sequence belongs to the ATPase B chain family. In terms of assembly, F-type ATPases have 2 components, F(1) - the catalytic core - and F(0) - the membrane proton channel. F(1) has five subunits: alpha(3), beta(3), gamma(1), delta(1), epsilon(1). F(0) has three main subunits: a(1), b(2) and c(10-14). The alpha and beta chains form an alternating ring which encloses part of the gamma chain. F(1) is attached to F(0) by a central stalk formed by the gamma and epsilon chains, while a peripheral stalk is formed by the delta and b chains.

It localises to the cell membrane. In terms of biological role, f(1)F(0) ATP synthase produces ATP from ADP in the presence of a proton or sodium gradient. F-type ATPases consist of two structural domains, F(1) containing the extramembraneous catalytic core and F(0) containing the membrane proton channel, linked together by a central stalk and a peripheral stalk. During catalysis, ATP synthesis in the catalytic domain of F(1) is coupled via a rotary mechanism of the central stalk subunits to proton translocation. Functionally, component of the F(0) channel, it forms part of the peripheral stalk, linking F(1) to F(0). This is ATP synthase subunit b from Streptomyces coelicolor (strain ATCC BAA-471 / A3(2) / M145).